Consider the following 446-residue polypeptide: Sensor protein PfeS (446 aa).

Topologically, residues 1–9 (MRRHPLLWK) are cytoplasmic. A helical transmembrane segment spans residues 10 to 30 (LALLQVGFCLLLTWLIYTWGL). At 31 to 155 (SVERSTYFLA…LLPGGLTPWT (125 aa)) the chain is on the periplasmic side. The chain crosses the membrane as a helical span at residues 156-176 (HLVTHGIVPTLLAALLGLLLY). The HAMP domain maps to 177-233 (RHLVVPLNRLRDRADALRADELESTPLAAPLAARRDELGELAQALEHMAERLRLSLA). The Cytoplasmic portion of the chain corresponds to 177-446 (RHLVVPLNRL…CLHLWLPAAA (270 aa)). Residues 241–446 (TLSHELRTPL…CLHLWLPAAA (206 aa)) enclose the Histidine kinase domain. His244 is modified (phosphohistidine; by autocatalysis).

Its subcellular location is the cell inner membrane. It catalyses the reaction ATP + protein L-histidine = ADP + protein N-phospho-L-histidine.. In terms of biological role, member of the two-component regulatory system PfeR/PfeS. May activate PfeR by phosphorylation. This Pseudomonas aeruginosa (strain ATCC 15692 / DSM 22644 / CIP 104116 / JCM 14847 / LMG 12228 / 1C / PRS 101 / PAO1) protein is Sensor protein PfeS (pfeS).